The chain runs to 323 residues: Prenyl transferase (323 aa).

The isopentenyl diphosphate site is built by Lys46, Arg49, and His81. Mg(2+)-binding residues include Asp88 and Asp92. An all-trans-polyprenyl diphosphate is bound at residue Arg97. Arg98 lines the isopentenyl diphosphate pocket. An all-trans-polyprenyl diphosphate-binding residues include Lys174, Thr175, and Gln212.

This sequence belongs to the FPP/GGPP synthase family. The cofactor is Mg(2+).

The protein resides in the plastid. It localises to the chloroplast. In terms of biological role, possible role in synthesis of the nonaprenyl side chain of plastoquinone or in synthesis of other prenyl chains such as undekaprenyl pyrophosphate. This chain is Prenyl transferase (preA), found in Porphyra purpurea (Red seaweed).